Here is a 1071-residue protein sequence, read N- to C-terminus: MKLIYTEMSYSMTEILVNEARKAADQGYRVFYIAPNSLSFEKEREVLTLLPERGTFSIIVTRFVQMSRYFTVESSPSKQHLDDTTLAMIFYRALMQLKPEDLPSYGRLQNNSVFIEQLVELYKELKNAQLSVHDLTGLDHPQKQEDLIKIIELAETIMIQQDYNQDSPLQSFARAIKLGLLNNQLSKTVVVIDGFSRFSAEEDYLLSLLNNNCQEVIIGSYVSQKAYQKSFIKGNIYEASLHFLQDLAQKYHIKPVFATSNQVFKPAFSRLTQLFEATHDFSQVDWQLQKNDLDHFSLWQCHHQKEEIEHVAKSIRQKLYEGYRYKDILVLLGDMDAYQLQIGPIFDKFEIPYYLGKAEPMAAHPLVQFIESLERSQRYNWRREDILNMLKSGLFGCFDDSDIDRFEEYTQFADIKGFTKFSKPFTINSSRQYPLDFLNEMRQDIVLPLQELFKSQKQLGASLVDKLILFLKKIRLAENMQGLAQSQLEVEKNEEVWKRFTDILTSFHHIFGQEKLRLSDCLALIKTGMKSAQYRVVPATLDVVTIKSYDLVQPHSKPFVYAIGLTQSHFPKQIHHSGLLSDQERARINEIRNYRHFDIASAENSKKNHQTALSLFNAATKELVLSVPTVINETFDDLSPYLKELINFGLPLLDKGKNYLSYDNSDIGNYKALLSQIIAINRQDLIEMSDQDKMFWTVVLRYLRKQLRKQQLELPTSDYRLSTKSLSKEVIEVCFPKRIPLKLSATALTVFYNNQYNYFLKYVLNLNKTESIHPDSRIHGQYLHRVFERLMKDHTQEPFDNKLKQAIYHTNQESFFQQIYQDNAEAEYSLAILEDIVRSTAPILQLNQNIQVIDQEKNFHLDMGNEILVHGIIDRIDQLSDGSLGIVDYKSSANQFDIGTFYNGLSPQLVTYLAALKQITPHDINQLFGAMYLHLQDPKLDLVTFKQIDNTLVESIYKALTYKGIFSEVEKEHLSTGAYQTKNALYSNDELETLLNYNRYLYLKAAKHIKKGHFLINPYTSDGKTVQGDQLKAITRFEADLDMGQARRLVTLPAKEKKECFLTLMRKESHL.

It belongs to the helicase family. AddB/RexB type 2 subfamily. In terms of assembly, heterodimer of AddA and RexB. Requires Mg(2+) as cofactor.

The heterodimer acts as both an ATP-dependent DNA helicase and an ATP-dependent, dual-direction single-stranded exonuclease. Recognizes the chi site generating a DNA molecule suitable for the initiation of homologous recombination. This subunit has 5' -&gt; 3' nuclease activity but not helicase activity. The protein is ATP-dependent helicase/deoxyribonuclease subunit B of Streptococcus pyogenes serotype M3 (strain ATCC BAA-595 / MGAS315).